A 98-amino-acid chain; its full sequence is Large ribosomal subunit protein uL23 (98 aa).

Belongs to the universal ribosomal protein uL23 family. As to quaternary structure, part of the 50S ribosomal subunit. Contacts protein L29, and trigger factor when it is bound to the ribosome.

Functionally, one of the early assembly proteins it binds 23S rRNA. One of the proteins that surrounds the polypeptide exit tunnel on the outside of the ribosome. Forms the main docking site for trigger factor binding to the ribosome. In Nitrosococcus oceani (strain ATCC 19707 / BCRC 17464 / JCM 30415 / NCIMB 11848 / C-107), this protein is Large ribosomal subunit protein uL23.